A 478-amino-acid chain; its full sequence is Protein nucleotidyltransferase YdiU (478 aa).

Residues G84, G86, R87, K107, D119, G120, R170, and R177 each contribute to the ATP site. Catalysis depends on D246, which acts as the Proton acceptor. Residues N247 and D256 each coordinate Mg(2+). D256 is a binding site for ATP.

Belongs to the SELO family. Mg(2+) serves as cofactor. It depends on Mn(2+) as a cofactor.

The catalysed reaction is L-seryl-[protein] + ATP = 3-O-(5'-adenylyl)-L-seryl-[protein] + diphosphate. It catalyses the reaction L-threonyl-[protein] + ATP = 3-O-(5'-adenylyl)-L-threonyl-[protein] + diphosphate. The enzyme catalyses L-tyrosyl-[protein] + ATP = O-(5'-adenylyl)-L-tyrosyl-[protein] + diphosphate. It carries out the reaction L-histidyl-[protein] + UTP = N(tele)-(5'-uridylyl)-L-histidyl-[protein] + diphosphate. The catalysed reaction is L-seryl-[protein] + UTP = O-(5'-uridylyl)-L-seryl-[protein] + diphosphate. It catalyses the reaction L-tyrosyl-[protein] + UTP = O-(5'-uridylyl)-L-tyrosyl-[protein] + diphosphate. Its function is as follows. Nucleotidyltransferase involved in the post-translational modification of proteins. It can catalyze the addition of adenosine monophosphate (AMP) or uridine monophosphate (UMP) to a protein, resulting in modifications known as AMPylation and UMPylation. This Escherichia coli O81 (strain ED1a) protein is Protein nucleotidyltransferase YdiU.